An 845-amino-acid chain; its full sequence is MSKLQQFPLSKGWSFRDSEDTSEDAWMPVPVVPSVVHQDLQANSKLKDPYIGFNELEARWVNEKSWTYKTVFQKPAAPAGSCIVLAFDGLDTFAKVKLDGNVILENDNMFLARRVDVTKALEAEGDHVLEIDFDCAFLRAKELRKQDPKHNWASFNGDPSRLSVRKAQYHWGWDWGPVLMTAGIWRDVRLEVYSARVADLWTEVQLASDHQSAQVTAFAEVESVHSGSHRACFTLSLHGQEIAREEIGVTENGTAKATFDVKEPSLWWPHGYGDATLYEVSVSLRKEQEELHKVSKKFGIRTAEVVQRPDKHGKSFFFRVNGVDIFCGGSCWIPADNLLPSITAERYRKWIELMVHGRQVMIRVWGGGIYEDNSFYDACDELGVLVWQDFMFGCGNYPTWPNLLESIRKESVYNVRRLRHHPSIVIWVGNNEDYQVQEQAGLTYNYEDKDPESWLKTDFPARYIYEKLLPEVVQEFSPSTFYHPGSPWGDGKTTSDPTVGDMHQWNVWHGTQEKYQIFDTLGGRFNSEFGMEAFPHMSTIDYFVENEADKYPQSHVLDFHNKADGHERRIATYLVENLRTATDLETHIYLTQVVQAETMMFGYRGWRRQWGDERHCGGALLWQLNDCWPTISWAIVDYFLRPKPAFYAVARVLNPIAVGVRREHHDWSVTHAQPPKTSKFELWVASSRQQEVQGTVELRFLSVNTGLEVRERIVHENVSIVPNGTTNLIVDGLIDHRVHSEPHVLAARIWVDGQLVARDVDWPQPFKYLDLSDRGLEIKKISESEDEQTLLISTQKPVKCLVFEEREGVRISDSAMDIVPGDDQRVTIKGLKPGDAPLKYKFLGQ.

The tract at residues 1–20 (MSKLQQFPLSKGWSFRDSED) is disordered. Residue N252 is glycosylated (N-linked (GlcNAc...) asparagine). E432 functions as the Proton donor in the catalytic mechanism. N717 and N723 each carry an N-linked (GlcNAc...) asparagine glycan.

It belongs to the glycosyl hydrolase 2 family. Beta-mannosidase B subfamily.

It catalyses the reaction Hydrolysis of terminal, non-reducing beta-D-mannose residues in beta-D-mannosides.. The protein operates within glycan metabolism; N-glycan degradation. Functionally, exoglycosidase that cleaves the single beta-linked mannose residue from the non-reducing end of beta-mannosidic oligosaccharides of various complexity and length. Prefers mannobiose over mannotriose and has no activity against polymeric mannan. Is also severely restricted by galactosyl substitutions at the +1 subsite. This Neosartorya fischeri (strain ATCC 1020 / DSM 3700 / CBS 544.65 / FGSC A1164 / JCM 1740 / NRRL 181 / WB 181) (Aspergillus fischerianus) protein is Beta-mannosidase B (mndB).